The following is a 206-amino-acid chain: Large ribosomal subunit protein uL4 (206 aa).

It belongs to the universal ribosomal protein uL4 family. In terms of assembly, part of the 50S ribosomal subunit.

Functionally, one of the primary rRNA binding proteins, this protein initially binds near the 5'-end of the 23S rRNA. It is important during the early stages of 50S assembly. It makes multiple contacts with different domains of the 23S rRNA in the assembled 50S subunit and ribosome. In terms of biological role, forms part of the polypeptide exit tunnel. The chain is Large ribosomal subunit protein uL4 from Rhodopseudomonas palustris (strain BisB5).